The sequence spans 182 residues: Protein transport protein gos1 (182 aa).

The Cytoplasmic segment spans residues 1–163 (MKSMLLRDSV…RKTSIRRRRD (163 aa)). A helical; Anchor for type IV membrane protein membrane pass occupies residues 164 to 181 (SIILALLISVLMLLFLFF). Residue H182 is a topological domain, vesicular.

This sequence belongs to the GOSR1 family. As to quaternary structure, component of a SNARE complex consisting of sed5, gos1, ykt6, and sft1.

The protein localises to the golgi apparatus membrane. Its function is as follows. Nonessential SNARE involved in retrograde transport within the Golgi complex. This is Protein transport protein gos1 (gos1) from Schizosaccharomyces pombe (strain 972 / ATCC 24843) (Fission yeast).